The following is a 94-amino-acid chain: Large ribosomal subunit protein bL25 (94 aa).

Belongs to the bacterial ribosomal protein bL25 family. In terms of assembly, part of the 50S ribosomal subunit; part of the 5S rRNA/L5/L18/L25 subcomplex. Contacts the 5S rRNA. Binds to the 5S rRNA independently of L5 and L18.

In terms of biological role, this is one of the proteins that binds to the 5S RNA in the ribosome where it forms part of the central protuberance. The sequence is that of Large ribosomal subunit protein bL25 from Klebsiella pneumoniae subsp. pneumoniae (strain ATCC 700721 / MGH 78578).